A 162-amino-acid chain; its full sequence is MNKSGIILIGTILFSSMAIADDLTAPIYTTGPKPVAIGKVTFTQTPYGVLITPDLTNLPEGPHGFHLHKTADCGNHGMHAEGHYDPQNTNSHQGPYGNGHLGDLPVLYVTSNGKAMIPTLAPRLKLSDMHNLAVMIHANGDTYSDNPPQGGGGDRIACGVIK.

A signal peptide spans 1-20 (MNKSGIILIGTILFSSMAIA). Positions 66, 68, and 83 each coordinate Cu cation. The cysteines at positions 73 and 158 are disulfide-linked. Residues His83, His92, His100, and Asp103 each contribute to the Zn(2+) site. His137 lines the Cu cation pocket.

Belongs to the Cu-Zn superoxide dismutase family. Homodimer. Cu cation serves as cofactor. It depends on Zn(2+) as a cofactor.

It localises to the periplasm. It catalyses the reaction 2 superoxide + 2 H(+) = H2O2 + O2. In terms of biological role, destroys radicals which are normally produced within the cells and which are toxic to biological systems. The sequence is that of Superoxide dismutase [Cu-Zn] (sodC) from Legionella pneumophila.